Reading from the N-terminus, the 422-residue chain is DNA-binding transcriptional activator AdeR (422 aa).

Belongs to the CdaR family.

Activates ald expression in response to alanine availability and is important for normal sporulation in B.subtilis. In Bacillus subtilis (strain 168), this protein is DNA-binding transcriptional activator AdeR.